The following is a 319-amino-acid chain: Vomeronasal type-1 receptor 51 (319 aa).

Topologically, residues 1-31 (MNEILFFSPQPLFSHMMNENSRVHTHSNLRH) are extracellular. Residues 32 to 52 (IFFSEIGIGISGNSFLLLFHI) traverse the membrane as a helical segment. At 53–65 (LKFIHGHRSRLSD) the chain is on the cytoplasmic side. Residues 66-86 (LPIGLLSLIHLLMLLVMAFIA) form a helical membrane-spanning segment. Topologically, residues 87–109 (TDIFISWRGWDDIICKFLVYLYR) are extracellular. A disulfide bridge connects residues cysteine 101 and cysteine 188. The helical transmembrane segment at 110 to 130 (VLRGLSLCTTSMLSVLQAIIL) threads the bilayer. The Cytoplasmic portion of the chain corresponds to 131 to 150 (SPRSSCLAKFKRKSLHHISC). Residues 151 to 171 (AILFLSVLYMLIGSQLLVSII) form a helical membrane-spanning segment. Topologically, residues 172–203 (ATPNLTTNDFIYVTQSCSILPLSYVMQSMFST) are extracellular. N-linked (GlcNAc...) asparagine glycosylation is present at asparagine 175. Residues 204–224 (LLVIRDVFLISLMVLSTWYMV) traverse the membrane as a helical segment. The Cytoplasmic segment spans residues 225 to 254 (ALLCRHRKKTQHLQGISLSPKTSPKQRATQ). A helical membrane pass occupies residues 255–275 (TLLMLMSFFVLMTIYDTIVSC). Residues 276–285 (SRTMFLNDPT) lie on the Extracellular side of the membrane. Residues 286–306 (SYNMQIFVVHIYATVSPFVFM) form a helical membrane-spanning segment. Residues 307-319 (STEKHIVNCLRSV) lie on the Cytoplasmic side of the membrane.

It belongs to the G-protein coupled receptor 1 family. As to expression, expressed in a subset of sensory neurons located in the apical layer of the vomeronasal organ.

It localises to the cell membrane. Its function is as follows. Putative pheromone receptor implicated in the regulation of social as well as reproductive behavior. This chain is Vomeronasal type-1 receptor 51 (Vmn1r51), found in Mus musculus (Mouse).